A 504-amino-acid polypeptide reads, in one-letter code: Maturase K (504 aa).

This sequence belongs to the intron maturase 2 family. MatK subfamily.

The protein resides in the plastid. Its subcellular location is the chloroplast. Its function is as follows. Usually encoded in the trnK tRNA gene intron. Probably assists in splicing its own and other chloroplast group II introns. The polypeptide is Maturase K (Lepidium campestre (Field pepperwort)).